A 391-amino-acid polypeptide reads, in one-letter code: Cdc42 effector protein 1 (391 aa).

2 positions are modified to phosphoserine: S19 and S27. Residue T34 is modified to Phosphothreonine. The region spanning 38–52 is the CRIB domain; sequence ISHPLGDFRHTMHVG. S39 bears the Phosphoserine mark. An Omega-N-methylarginine modification is found at R53. A phosphoserine mark is found at S65, S73, S77, S101, S113, S121, and S139. Positions 163-189 are disordered; sequence ISRLPRSEKPHDRDRDGSFPSEPGLRR. The span at 167–179 shows a compositional bias: basic and acidic residues; sequence PRSEKPHDRDRDG. S180, S190, S192, and S195 each carry phosphoserine. A run of 8 repeats spans residues 220–226, 227–233, 234–240, 241–247, 248–254, 255–261, 262–268, and 269–275. Residues 220–275 are 8 X 7 AA tandem repeats of [PT]-[AT]-A-[ENT]-[PT]-[PTS]-[AG]; it reads PAAETPAPAANPPAPTANPTGPAANPPATTANPPAPAANPSAPAATPTGPAANPPA. The segment at 221 to 338 is disordered; that stretch reads AAETPAPAAN…HHYPEMDARQ (118 aa). The span at 236-270 shows a compositional bias: low complexity; that stretch reads ANPTGPAANPPATTANPPAPAANPSAPAATPTGPA. S303 is modified (phosphoserine). Residues 327-338 are compositionally biased toward basic and acidic residues; sequence GGHHYPEMDARQ. Phosphoserine occurs at positions 350 and 353. Residues 354–391 are disordered; it reads LDEEWRAPQAGSRTPVPSTVQANTFEFADAEEDDEVKV. Residues 364-377 show a composition bias toward polar residues; it reads GSRTPVPSTVQANT. A compositionally biased stretch (acidic residues) spans 381–391; it reads ADAEEDDEVKV.

Belongs to the BORG/CEP family. In terms of assembly, interacts with RHOQ and CDC42, in a GTP-dependent manner. In terms of tissue distribution, endothelial and bone marrow stromal cells.

Its subcellular location is the endomembrane system. The protein localises to the cytoplasm. It localises to the cytoskeleton. Functionally, probably involved in the organization of the actin cytoskeleton. Induced membrane extensions in fibroblasts. This Homo sapiens (Human) protein is Cdc42 effector protein 1 (CDC42EP1).